The sequence spans 499 residues: DAZ protein 1 (499 aa).

The tract at residues 1–29 (MMSPPLRYQKDQQNQQHQQNQSQQAAHQM) is disordered. Over residues 12–28 (QQNQQHQQNQSQQAAHQ) the composition is skewed to low complexity. Positions 66 to 144 (PNRIFVGGFP…SRKLNLGPAI (79 aa)) constitute an RRM domain. The segment covering 195-224 (FVYPPLRSQDQSRQQSEQQTTPQNSPTNLQ) has biased composition (low complexity). Disordered regions lie at residues 195-304 (FVYP…NNGG) and 406-499 (YPGN…TKNN). Residues 214-236 (TTPQNSPTNLQHQQSPQVFFGGD) enclose the DAZ domain. Residues 251–262 (EKSEVSPEKHES) show a composition bias toward basic and acidic residues. Residues 263–279 (VSPQPLLPNQNVLNTQY) show a composition bias toward polar residues. The span at 280-304 (SQGQQQWNSNVQQQQQQQMDSNNGG) shows a compositional bias: low complexity. Positions 406–425 (YPGNFSQQHTMGNNENTFSL) are enriched in polar residues. Over residues 438-447 (KPSECQDKKT) the composition is skewed to basic and acidic residues. The segment covering 480 to 499 (LSPLSASLQSLAISSPTKNN) has biased composition (low complexity).

The protein belongs to the RRM DAZ family. Germline specific. More strongly expressed during oogenesis than during spermatogenesis. During the larval stages, it is more abundant at the distal region than the proximal region of the gonad. In young adult hermaphrodites, it is expressed at a very low level in the distal mitotic region of the gonad, and begins to accumulate in the meiotic transition zone. Highly expressed in the proximal pachytene region. Not expressed in mature oocytes. Not expressed in the spermatheca. Weakly or not expressed in the germline of adult males.

In terms of biological role, RNA-binding protein that plays a central role in oogenesis, but not for spermatogenesis. Required for meiotic entry and germline differentiation, at the pachytene stage of meiosis I of female germline regardless of the sex of the soma. May act by regulating translation of specific mRNAs, possibly by binding to their 3'-UTR. This Caenorhabditis elegans protein is DAZ protein 1 (daz-1).